The primary structure comprises 258 residues: Myogenic factor 5 (258 aa).

The disordered stretch occupies residues 21 to 50 (LSSPEGEFPEDFEPRELPPFGAPAPTEPAC). The bHLH domain maps to 85-136 (DRRKAATMRERRRLKKVNQAFETLKRCTTANPNQRLPKVEILRNAIRYIESL). The disordered stretch occupies residues 220–258 (AEEPGLPLRHAGSLSPGASIDSGPGTPGSPPPRRTYQAL).

In terms of assembly, efficient DNA binding requires dimerization with another bHLH protein.

The protein localises to the nucleus. Acts as a transcriptional activator that promotes transcription of muscle-specific target genes and plays a role in muscle differentiation. Induces fibroblasts to differentiate into myoblasts. Probable sequence specific DNA-binding protein. The sequence is that of Myogenic factor 5 (MYF5) from Gallus gallus (Chicken).